The following is a 1336-amino-acid chain: pre-mRNA 3' end processing protein WDR33 (1336 aa).

An N-acetylalanine modification is found at A2. S7 is subject to Phosphoserine. An N6-acetyllysine modification is found at K46. 7 WD repeats span residues K117–I156, A159–F198, A200–I239, G242–T283, A286–Q325, G329–G369, and A373–R412. Residues K526, K530, and K560 each participate in a glycyl lysine isopeptide (Lys-Gly) (interchain with G-Cter in SUMO2) cross-link. The disordered stretch occupies residues Q568 to R1336. A compositionally biased stretch (pro residues) spans Q573–G590. The span at M594–S607 shows a compositional bias: polar residues. Low complexity predominate over residues Q608–H643. One can recognise a Collagen-like domain in the interval G618–P770. Positions P683–P695 are enriched in pro residues. Low complexity-rich tracts occupy residues Q696 to P707 and Q726 to G751. The residue at position 782 (R782) is an Omega-N-methylarginine. Residues G854–L869 show a composition bias toward low complexity. Asymmetric dimethylarginine is present on R915. Residues P932–G941 are compositionally biased toward low complexity. Composition is skewed to basic and acidic residues over residues S971–P989 and G998–G1034. R987 is modified (omega-N-methylarginine). Position 1035 is an omega-N-methylarginine (R1035). Basic and acidic residues-rich tracts occupy residues P1056–G1068 and E1078–D1122. The segment covering F1130–E1140 has biased composition (acidic residues). The segment covering E1141–G1150 has biased composition (basic and acidic residues). The segment covering R1151–R1160 has biased composition (basic residues). Basic and acidic residues-rich tracts occupy residues E1169 to S1217 and S1242 to G1259. S1210 carries the post-translational modification Phosphoserine. Residue R1262 is modified to Omega-N-methylarginine. The segment covering D1281–P1293 has biased composition (basic and acidic residues). A compositionally biased stretch (low complexity) spans G1301–R1326. Asymmetric dimethylarginine; alternate is present on R1315. Residue R1315 is modified to Omega-N-methylarginine; alternate.

Belongs to the WD repeat WDR33 family. Component of the cleavage and polyadenylation specificity factor (CPSF) module of the pre-mRNA 3'-end processing complex. Interacts with CPSF3/CPSF73. Most highly expressed in testis.

Its subcellular location is the nucleus. Essential for both cleavage and polyadenylation of pre-mRNA 3' ends. This Homo sapiens (Human) protein is pre-mRNA 3' end processing protein WDR33 (WDR33).